Consider the following 562-residue polypeptide: Dihydroxy-acid dehydratase (562 aa).

A Mg(2+)-binding site is contributed by aspartate 80. Cysteine 121 provides a ligand contact to [2Fe-2S] cluster. Mg(2+)-binding residues include aspartate 122 and lysine 123. Residue lysine 123 is modified to N6-carboxylysine. Position 194 (cysteine 194) interacts with [2Fe-2S] cluster. Glutamate 446 is a binding site for Mg(2+). Serine 472 (proton acceptor) is an active-site residue.

It belongs to the IlvD/Edd family. Homodimer. It depends on [2Fe-2S] cluster as a cofactor. Mg(2+) serves as cofactor.

The enzyme catalyses (2R)-2,3-dihydroxy-3-methylbutanoate = 3-methyl-2-oxobutanoate + H2O. It carries out the reaction (2R,3R)-2,3-dihydroxy-3-methylpentanoate = (S)-3-methyl-2-oxopentanoate + H2O. It functions in the pathway amino-acid biosynthesis; L-isoleucine biosynthesis; L-isoleucine from 2-oxobutanoate: step 3/4. It participates in amino-acid biosynthesis; L-valine biosynthesis; L-valine from pyruvate: step 3/4. Functionally, functions in the biosynthesis of branched-chain amino acids. Catalyzes the dehydration of (2R,3R)-2,3-dihydroxy-3-methylpentanoate (2,3-dihydroxy-3-methylvalerate) into 2-oxo-3-methylpentanoate (2-oxo-3-methylvalerate) and of (2R)-2,3-dihydroxy-3-methylbutanoate (2,3-dihydroxyisovalerate) into 2-oxo-3-methylbutanoate (2-oxoisovalerate), the penultimate precursor to L-isoleucine and L-valine, respectively. This chain is Dihydroxy-acid dehydratase, found in Macrococcus caseolyticus (strain JCSC5402) (Macrococcoides caseolyticum).